Reading from the N-terminus, the 243-residue chain is PF03932 family protein CutC (243 aa).

The protein belongs to the CutC family.

The protein localises to the cytoplasm. This Histophilus somni (strain 2336) (Haemophilus somnus) protein is PF03932 family protein CutC.